The chain runs to 431 residues: Phosphomethylpyrimidine synthase (431 aa).

Substrate is bound by residues Asn-66, Met-95, Tyr-124, His-163, 185 to 187, 226 to 229, and Glu-265; these read SRG and DGLR. His-269 serves as a coordination point for Zn(2+). Substrate is bound at residue Tyr-292. His-333 contacts Zn(2+). 3 residues coordinate [4Fe-4S] cluster: Cys-408, Cys-411, and Cys-415.

Belongs to the ThiC family. Requires [4Fe-4S] cluster as cofactor.

The enzyme catalyses 5-amino-1-(5-phospho-beta-D-ribosyl)imidazole + S-adenosyl-L-methionine = 4-amino-2-methyl-5-(phosphooxymethyl)pyrimidine + CO + 5'-deoxyadenosine + formate + L-methionine + 3 H(+). The protein operates within cofactor biosynthesis; thiamine diphosphate biosynthesis. Catalyzes the synthesis of the hydroxymethylpyrimidine phosphate (HMP-P) moiety of thiamine from aminoimidazole ribotide (AIR) in a radical S-adenosyl-L-methionine (SAM)-dependent reaction. This chain is Phosphomethylpyrimidine synthase, found in Dehalococcoides mccartyi (strain CBDB1).